A 505-amino-acid chain; its full sequence is Cytochrome c oxidase subunit 1 (505 aa).

Residues 14 to 34 (LLYLVFAFFGGLLGTSLSMLI) traverse the membrane as a helical segment. Glu37 and Gly42 together coordinate Ca(2+). Transmembrane regions (helical) follow at residues 55–75 (VIIT…ALFG), 98–118 (NISF…TLVE), 143–163 (AILS…NMLV), 180–200 (LFVW…PVLA), 229–249 (LFWF…FGIV), and 261–281 (VFGL…GFIV). His60 is a Fe(II)-heme a binding site. Cu cation-binding residues include His235 and Tyr239. Residues 235 to 239 (HPEVY) constitute a cross-link (1'-histidyl-3'-tyrosine (His-Tyr)). Tyr239 serves as a coordination point for O2. Cu cation is bound by residues His284 and His285. A run of 2 helical transmembrane segments spans residues 302 to 322 (ATMI…ATIY) and 332 to 352 (MWFA…GVVL). Mg(2+) is bound by residues His362 and Asp363. His370 provides a ligand contact to heme a3. Residue His372 participates in Fe(II)-heme a binding. 3 helical membrane-spanning segments follow: residues 374–394 (VLSM…GNLI), 408–428 (FWLL…LGLA), and 446–466 (AVSS…ATTF).

It belongs to the heme-copper respiratory oxidase family. Component of the cytochrome c oxidase (complex IV, CIV), a multisubunit enzyme composed of a catalytic core of 3 subunits and several supernumerary subunits. The complex exists as a monomer or a dimer and forms supercomplexes (SCs) in the inner mitochondrial membrane with ubiquinol-cytochrome c oxidoreductase (cytochrome b-c1 complex, complex III, CIII). Heme serves as cofactor. Requires Cu cation as cofactor.

The protein localises to the mitochondrion inner membrane. It carries out the reaction 4 Fe(II)-[cytochrome c] + O2 + 8 H(+)(in) = 4 Fe(III)-[cytochrome c] + 2 H2O + 4 H(+)(out). Its pathway is energy metabolism; oxidative phosphorylation. In terms of biological role, component of the cytochrome c oxidase, the last enzyme in the mitochondrial electron transport chain which drives oxidative phosphorylation. The respiratory chain contains 3 multisubunit complexes succinate dehydrogenase (complex II, CII), ubiquinol-cytochrome c oxidoreductase (cytochrome b-c1 complex, complex III, CIII) and cytochrome c oxidase (complex IV, CIV), that cooperate to transfer electrons derived from NADH and succinate to molecular oxygen, creating an electrochemical gradient over the inner membrane that drives transmembrane transport and the ATP synthase. Cytochrome c oxidase is the component of the respiratory chain that catalyzes the reduction of oxygen to water. Electrons originating from reduced cytochrome c in the intermembrane space (IMS) are transferred via the dinuclear copper A center (CU(A)) of subunit 2 and heme A of subunit 1 to the active site in subunit 1, a binuclear center (BNC) formed by heme A3 and copper B (CU(B)). The BNC reduces molecular oxygen to 2 water molecules using 4 electrons from cytochrome c in the IMS and 4 protons from the mitochondrial matrix. In Chlamydomonas reinhardtii (Chlamydomonas smithii), this protein is Cytochrome c oxidase subunit 1 (COX1).